Reading from the N-terminus, the 215-residue chain is Ribose-5-phosphate isomerase A (215 aa).

Substrate contacts are provided by residues 26-29 (TGST), 79-82 (DGAD), and 92-95 (KGGG). The Proton acceptor role is filled by glutamate 101. Lysine 119 lines the substrate pocket.

It belongs to the ribose 5-phosphate isomerase family. In terms of assembly, homodimer.

The catalysed reaction is aldehydo-D-ribose 5-phosphate = D-ribulose 5-phosphate. The protein operates within carbohydrate degradation; pentose phosphate pathway; D-ribose 5-phosphate from D-ribulose 5-phosphate (non-oxidative stage): step 1/1. Functionally, catalyzes the reversible conversion of ribose-5-phosphate to ribulose 5-phosphate. In Xanthomonas axonopodis pv. citri (strain 306), this protein is Ribose-5-phosphate isomerase A.